The chain runs to 648 residues: Macrolide export ATP-binding/permease protein MacB (648 aa).

One can recognise an ABC transporter domain in the interval 5–243; it reads LELKDIRRSY…TGGTEPVVNT (239 aa). 41-48 is a binding site for ATP; the sequence is GASGSGKS. Helical transmembrane passes span 273 to 293, 523 to 543, 576 to 596, and 611 to 631; these read LLTMLGIIIGIASVVSIVVVG, LFLTLVAVISLVVGGIGVMNI, AVLVCLVGGALGITLSLLIAF, and PLALLLAFLCSTVTGILFGWL.

The protein belongs to the ABC transporter superfamily. Macrolide exporter (TC 3.A.1.122) family. Homodimer. Part of the tripartite efflux system MacAB-TolC, which is composed of an inner membrane transporter, MacB, a periplasmic membrane fusion protein, MacA, and an outer membrane component, TolC. The complex forms a large protein conduit and can translocate molecules across both the inner and outer membranes. Interacts with MacA.

It is found in the cell inner membrane. Functionally, part of the tripartite efflux system MacAB-TolC. MacB is a non-canonical ABC transporter that contains transmembrane domains (TMD), which form a pore in the inner membrane, and an ATP-binding domain (NBD), which is responsible for energy generation. Confers resistance against macrolides. The polypeptide is Macrolide export ATP-binding/permease protein MacB (Escherichia coli (strain UTI89 / UPEC)).